We begin with the raw amino-acid sequence, 98 residues long: Small ribosomal subunit protein bS6 (98 aa).

The protein belongs to the bacterial ribosomal protein bS6 family.

Functionally, binds together with bS18 to 16S ribosomal RNA. The polypeptide is Small ribosomal subunit protein bS6 (Levilactobacillus brevis (strain ATCC 367 / BCRC 12310 / CIP 105137 / JCM 1170 / LMG 11437 / NCIMB 947 / NCTC 947) (Lactobacillus brevis)).